The chain runs to 216 residues: Redox-sensing transcriptional repressor Rex (216 aa).

Positions 17–56 (IYFRYLTFLHDAGTDRISSAELSDAIKFDAATIRRDFSYF) form a DNA-binding region, H-T-H motif. 91-96 (GAGNLG) is a binding site for NAD(+).

Belongs to the transcriptional regulatory Rex family. Homodimer.

It localises to the cytoplasm. Its function is as follows. Modulates transcription in response to changes in cellular NADH/NAD(+) redox state. The sequence is that of Redox-sensing transcriptional repressor Rex from Leuconostoc citreum (strain KM20).